We begin with the raw amino-acid sequence, 231 residues long: Phosphoglycolate phosphatase (231 aa).

Residue Asp9 is the Nucleophile of the active site. Mg(2+)-binding residues include Asp9 and Asp11. Lys154 contributes to the substrate binding site. Positions 177 and 181 each coordinate Mg(2+).

This sequence belongs to the archaeal SPP-like hydrolase family. The cofactor is Mg(2+).

The catalysed reaction is 2-phosphoglycolate + H2O = glycolate + phosphate. Functionally, catalyzes the dephosphorylation of 2-phosphoglycolate. The polypeptide is Phosphoglycolate phosphatase (Nitrosopumilus maritimus (strain SCM1)).